The chain runs to 480 residues: Cysteine--tRNA ligase (480 aa).

Residue C29 coordinates Zn(2+). Residues I31–H41 carry the 'HIGH' region motif. 3 residues coordinate Zn(2+): C215, H240, and E244. The 'KMSKS' region signature appears at K272–S276. K275 lines the ATP pocket.

Belongs to the class-I aminoacyl-tRNA synthetase family. Monomer. Zn(2+) serves as cofactor.

The protein resides in the cytoplasm. It catalyses the reaction tRNA(Cys) + L-cysteine + ATP = L-cysteinyl-tRNA(Cys) + AMP + diphosphate. The protein is Cysteine--tRNA ligase of Microcystis aeruginosa (strain NIES-843 / IAM M-2473).